The chain runs to 143 residues: Endoribonuclease YbeY (143 aa).

3 residues coordinate Zn(2+): histidine 106, histidine 110, and histidine 116.

This sequence belongs to the endoribonuclease YbeY family. Zn(2+) serves as cofactor.

It is found in the cytoplasm. Single strand-specific metallo-endoribonuclease involved in late-stage 70S ribosome quality control and in maturation of the 3' terminus of the 16S rRNA. This chain is Endoribonuclease YbeY, found in Petrotoga mobilis (strain DSM 10674 / SJ95).